The sequence spans 779 residues: Serine/threonine-protein kinase SIK1 (779 aa).

Residues 27-278 (YDVERTLGKG…IAQIRQHRWM (252 aa)) form the Protein kinase domain. Residues 33–41 (LGKGNFAVV) and K56 contribute to the ATP site. The active-site Proton acceptor is D149. T182 carries the phosphothreonine; by LKB1 and GSK3-beta modification. The residue at position 186 (S186) is a Phosphoserine; by autocatalysis. One can recognise a UBA domain in the interval 303–343 (DYNEQVLGIMQALGIDRQRTIESLQNSSYNHFAAIYYLLLE). A Phosphothreonine; by CaMK1 modification is found at T322. Disordered regions lie at residues 350–375 (SAQPSSRPTPAPTRQPQLRSSDLSSL) and 449–472 (EARQGPSLEEEQEVQEPLPGSTGR). The span at 363–373 (RQPQLRSSDLS) shows a compositional bias: polar residues. Residue S577 is modified to Phosphoserine; by PKA. Residues 586 to 612 (KAFRQQLRKNARTKGFLGLNKIKGLAR) are RK-rich region. Residues 621-641 (TPRGGMSTFHTPAPSSGLQGC) are disordered. Residues 628 to 641 (TFHTPAPSSGLQGC) show a composition bias toward polar residues.

It belongs to the protein kinase superfamily. CAMK Ser/Thr protein kinase family. AMPK subfamily. Interacts (when phosphorylated on Thr-182 and Ser-186) with YWHAZ. Interacts with ATP1A1. It depends on Mg(2+) as a cofactor. Post-translationally, phosphorylated at Thr-182 by STK11/LKB1 in complex with STE20-related adapter-alpha (STRADA) pseudo kinase and CAB39, leading to its activation. Phosphorylation at Thr-182 promotes autophosphorylation at Ser-186, which is required for sustained activity. Autophosphorylation at Ser-186 is maintained by sequential phosphorylation at Thr-182 by GSK3-beta. GSK3-beta cannot initiate phosphorylation at Thr-182, it can only maintain it. Phosphorylation at Ser-577 by PKA promotes translocation to the cytoplasm. Phosphorylation at Thr-322 by CaMK1 following intracellular sodium concentration leads to activation. In terms of tissue distribution, expressed in lung, skin, ovary, heart and stomach. No expression in brain, liver or adult skeletal muscle but is present in skeletal muscle progenitor cells of the somite beginning at 9.5 dpc. Present at 8.0 dpc in the monolayer of presumptive myocardial cells but rapidly down-regulated at 8.5 dpc upon primitive ventricle formation, although still present in myocardial cells that will populate the primitive atrium and bulbus cordis. At 9.5 dpc expression is down-regulated in the primitive atrium but observed in the sinus venosus and truncus arteriosus.

Its subcellular location is the cytoplasm. The protein localises to the nucleus. It catalyses the reaction L-seryl-[protein] + ATP = O-phospho-L-seryl-[protein] + ADP + H(+). The catalysed reaction is L-threonyl-[protein] + ATP = O-phospho-L-threonyl-[protein] + ADP + H(+). Activated by phosphorylation on Thr-182. Also activated by phosphorylation on Thr-322 in response to increases in intracellular sodium in parallel with elevations in intracellular calcium through the reversible sodium/calcium exchanger. Serine/threonine-protein kinase involved in various processes such as cell cycle regulation, gluconeogenesis and lipogenesis regulation, muscle growth and differentiation and tumor suppression. Phosphorylates HDAC4, HDAC5, PPME1, SREBF1, CRTC1/TORC1 and CRTC2/TORC2. Acts as a tumor suppressor and plays a key role in p53/TP53-dependent anoikis, a type of apoptosis triggered by cell detachment: required for phosphorylation of p53/TP53 in response to loss of adhesion and is able to suppress metastasis. Part of a sodium-sensing signaling network, probably by mediating phosphorylation of PPME1: following increases in intracellular sodium, SIK1 is activated by CaMK1 and phosphorylates PPME1 subunit of protein phosphatase 2A (PP2A), leading to dephosphorylation of sodium/potassium-transporting ATPase ATP1A1 and subsequent increase activity of ATP1A1. Acts as a regulator of muscle cells by phosphorylating and inhibiting class II histone deacetylases HDAC4 and HDAC5, leading to promote expression of MEF2 target genes in myocytes. Also required during cardiomyogenesis by regulating the exit of cardiomyoblasts from the cell cycle via down-regulation of CDKN1C/p57Kip2. Acts as a regulator of hepatic gluconeogenesis by phosphorylating and repressing the CREB-specific coactivators CRTC1/TORC1 and CRTC2/TORC2, leading to inhibit CREB activity. Also regulates hepatic lipogenesis by phosphorylating and inhibiting SREBF1. In concert with CRTC1/TORC1, regulates the light-induced entrainment of the circadian clock by attenuating PER1 induction; represses CREB-mediated transcription of PER1 by phosphorylating and deactivating CRTC1/TORC1. The protein is Serine/threonine-protein kinase SIK1 (Sik1) of Mus musculus (Mouse).